Consider the following 79-residue polypeptide: Acyl carrier protein 2 (79 aa).

Residues D2–V77 enclose the Carrier domain. S37 is modified (O-(pantetheine 4'-phosphoryl)serine).

The protein belongs to the acyl carrier protein (ACP) family. Post-translationally, 4'-phosphopantetheine is transferred from CoA to a specific serine of apo-ACP by AcpS. This modification is essential for activity because fatty acids are bound in thioester linkage to the sulfhydryl of the prosthetic group.

It localises to the cytoplasm. The protein operates within lipid metabolism; fatty acid biosynthesis. Functionally, carrier of the growing fatty acid chain in fatty acid biosynthesis. The sequence is that of Acyl carrier protein 2 from Pseudomonas aeruginosa (strain ATCC 15692 / DSM 22644 / CIP 104116 / JCM 14847 / LMG 12228 / 1C / PRS 101 / PAO1).